Consider the following 136-residue polypeptide: uncharacterized protein (136 aa).

The protein localises to the mitochondrion. This is an uncharacterized protein from Marchantia polymorpha (Common liverwort).